The chain runs to 285 residues: Acetylglutamate kinase (285 aa).

Residues 63–64 (GG), R85, and N178 each bind substrate.

The protein belongs to the acetylglutamate kinase family. ArgB subfamily.

It is found in the cytoplasm. The enzyme catalyses N-acetyl-L-glutamate + ATP = N-acetyl-L-glutamyl 5-phosphate + ADP. Its pathway is amino-acid biosynthesis; L-arginine biosynthesis; N(2)-acetyl-L-ornithine from L-glutamate: step 2/4. Its function is as follows. Catalyzes the ATP-dependent phosphorylation of N-acetyl-L-glutamate. The chain is Acetylglutamate kinase from Synechococcus sp. (strain CC9311).